Consider the following 170-residue polypeptide: Phosphopantetheine adenylyltransferase (170 aa).

Threonine 9 contributes to the substrate binding site. ATP is bound by residues 9-10 and histidine 17; that span reads TF. Substrate-binding residues include lysine 41, leucine 73, and arginine 87. Residues 88 to 90, glutamate 98, and 123 to 129 contribute to the ATP site; these read GLR and YQFISGT.

The protein belongs to the bacterial CoaD family. In terms of assembly, homohexamer. It depends on Mg(2+) as a cofactor.

The protein localises to the cytoplasm. It carries out the reaction (R)-4'-phosphopantetheine + ATP + H(+) = 3'-dephospho-CoA + diphosphate. Its pathway is cofactor biosynthesis; coenzyme A biosynthesis; CoA from (R)-pantothenate: step 4/5. In terms of biological role, reversibly transfers an adenylyl group from ATP to 4'-phosphopantetheine, yielding dephospho-CoA (dPCoA) and pyrophosphate. This Bordetella petrii (strain ATCC BAA-461 / DSM 12804 / CCUG 43448) protein is Phosphopantetheine adenylyltransferase.